Reading from the N-terminus, the 238-residue chain is 15,16-dihydrobiliverdin:ferredoxin oxidoreductase (238 aa).

Belongs to the HY2 family.

The enzyme catalyses 15,16-dihydrobiliverdin + oxidized 2[4Fe-4S]-[ferredoxin] = biliverdin IXalpha + reduced 2[4Fe-4S]-[ferredoxin] + 2 H(+). In terms of biological role, catalyzes the two-electron reduction of biliverdin IX-alpha at the C15 methine bridge. The sequence is that of 15,16-dihydrobiliverdin:ferredoxin oxidoreductase from Prochlorococcus marinus (strain NATL2A).